The following is a 212-amino-acid chain: Adenylate kinase (212 aa).

Gly10–Thr15 provides a ligand contact to ATP. Positions Ser30–Val59 are NMP. AMP contacts are provided by residues Thr31, Arg36, Glu57–Val59, Gly86–Arg89, and Gln93. The LID stretch occupies residues Gly127–Asp159. ATP-binding positions include Arg128 and Thr137–Tyr138. Residues Arg156 and Arg167 each coordinate AMP. Gln195 contributes to the ATP binding site.

The protein belongs to the adenylate kinase family. As to quaternary structure, monomer.

It is found in the cytoplasm. The catalysed reaction is AMP + ATP = 2 ADP. It functions in the pathway purine metabolism; AMP biosynthesis via salvage pathway; AMP from ADP: step 1/1. In terms of biological role, catalyzes the reversible transfer of the terminal phosphate group between ATP and AMP. Plays an important role in cellular energy homeostasis and in adenine nucleotide metabolism. This Streptococcus mutans serotype c (strain ATCC 700610 / UA159) protein is Adenylate kinase.